The chain runs to 110 residues: UPF0060 membrane protein AHA_2410 (110 aa).

4 consecutive transmembrane segments (helical) span residues 8-28 (GLFL…YLWL), 33-53 (SVWL…LLSL), 63-83 (AAYG…VDGI), and 87-107 (LWDL…MFAP).

The protein belongs to the UPF0060 family.

It localises to the cell inner membrane. The polypeptide is UPF0060 membrane protein AHA_2410 (Aeromonas hydrophila subsp. hydrophila (strain ATCC 7966 / DSM 30187 / BCRC 13018 / CCUG 14551 / JCM 1027 / KCTC 2358 / NCIMB 9240 / NCTC 8049)).